Consider the following 188-residue polypeptide: Putative 3-methyladenine DNA glycosylase (188 aa).

Belongs to the DNA glycosylase MPG family.

The polypeptide is Putative 3-methyladenine DNA glycosylase (Ehrlichia ruminantium (strain Gardel)).